The chain runs to 1342 residues: Subtilisin-like protease 2 (1342 aa).

The signal sequence occupies residues 1 to 18 (MLNIIYVVSLILIKFIFY). Residues 19–687 (KECNNNNNYY…KLYNNKYSFL (669 aa)) constitute a propeptide, inhibition peptide. Disordered stretches follow at residues 85 to 111 (EKKT…ENEI) and 143 to 171 (ADVS…NYKN). Residues Asn165, Asn343, Asn451, Asn455, and Asn493 are each glycosylated (N-linked (GlcNAc...) asparagine). Residues 415–474 (KKSKKEKENTQQKGGNNPNVDINILNNNNNNNNNNNNNSNNNSNSMNDEEINYNNNNNKE) form a disordered region. The segment covering 430-474 (NNPNVDINILNNNNNNNNNNNNNSNNNSNSMNDEEINYNNNNNKE) has biased composition (low complexity). The interval 500-531 (IYHNKNDNSYKNKKEGTGKNNDNNDPNNNNNK) is disordered. Basic and acidic residues predominate over residues 503-516 (NKNDNSYKNKKEGT). Over residues 518 to 531 (KNNDNNDPNNNNNK) the composition is skewed to low complexity. N-linked (GlcNAc...) asparagine glycosylation is found at Asn551, Asn642, and Asn729. The Extracellular portion of the chain corresponds to 688–1137 (NKFLNIEPLI…LYNLYEYDSH (450 aa)). In terms of domain architecture, Peptidase S8 spans 727 to 1020 (TWNLSIIRVF…DSLVNAEGAV (294 aa)). Active-site charge relay system residues include Asp755 and His798. N-linked (GlcNAc...) asparagine glycosylation is found at Asn821, Asn857, Asn893, and Asn951. Ser961 acts as the Charge relay system in catalysis. N-linked (GlcNAc...) asparagine glycans are attached at residues Asn1010 and Asn1106. Residues 1138–1158 (YLLASVILFFLALLSIFVGMI) traverse the membrane as a helical segment. Over 1159–1342 (YMKSRKHSDK…MNQLDDMFMK (184 aa)) the chain is Cytoplasmic.

The protein belongs to the peptidase S8 family. Post-translationally, proteolytically cleaved at the N-terminus to generate a 74kDa intermediate which is further processed into a 72kDa form. The first maturation cleavage is autocatalytic, occurs in the ER and is necessary for the subsequent SUB2 trafficking to the microneme. The second cleavage may be mediated by PMX/plasmepsin X.

It localises to the cell membrane. The protein localises to the cytoplasmic vesicle. Its subcellular location is the secretory vesicle. The protein resides in the microneme membrane. The enzyme catalyses Hydrolysis of proteins with broad specificity for peptide bonds, and a preference for a large uncharged residue in P1. Hydrolyzes peptide amides.. Its activity is regulated as follows. Activation may be calcium-dependent. Inhibited by the non-covalent interaction with the cleaved propeptide. Functionally, serine protease which plays an essential role in the shedding of AMA1, MSP1 and MSP7 from the surface of the invading merozoite; this step is essential for productive invasion and the release of the adhesion between the erythrocyte and the merozoite. May cleave TRAMP/PTTRAMP, thereby shedding TRAMP from the merozoite surface during erythrocyte invasion. The chain is Subtilisin-like protease 2 from Plasmodium falciparum.